The sequence spans 98 residues: NADH-ubiquinone oxidoreductase chain 4L (98 aa).

3 helical membrane passes run 1–21 (MPIIYMNIMLAFTISLLGMLT), 29–49 (SLLCLEGMMLSLFIMSTLMAL), and 58–78 (IVPIALLVFAACEAAVGLSLL).

This sequence belongs to the complex I subunit 4L family. Core subunit of respiratory chain NADH dehydrogenase (Complex I) which is composed of 45 different subunits.

The protein resides in the mitochondrion inner membrane. The catalysed reaction is a ubiquinone + NADH + 5 H(+)(in) = a ubiquinol + NAD(+) + 4 H(+)(out). Functionally, core subunit of the mitochondrial membrane respiratory chain NADH dehydrogenase (Complex I) which catalyzes electron transfer from NADH through the respiratory chain, using ubiquinone as an electron acceptor. Part of the enzyme membrane arm which is embedded in the lipid bilayer and involved in proton translocation. In Presbytis melalophos (Mitred leaf monkey), this protein is NADH-ubiquinone oxidoreductase chain 4L (MT-ND4L).